The chain runs to 754 residues: 5-methyltetrahydropteroyltriglutamate--homocysteine methyltransferase (754 aa).

Residues 17 to 20 (RELK) and Lys117 contribute to the 5-methyltetrahydropteroyltri-L-glutamate site. L-homocysteine is bound by residues 431 to 433 (IGS) and Glu484. L-methionine contacts are provided by residues 431–433 (IGS) and Glu484. Residues 515–516 (RC) and Trp561 contribute to the 5-methyltetrahydropteroyltri-L-glutamate site. Asp599 lines the L-homocysteine pocket. Asp599 contacts L-methionine. Residue Glu605 participates in 5-methyltetrahydropteroyltri-L-glutamate binding. The Zn(2+) site is built by His641, Cys643, and Glu665. His694 serves as the catalytic Proton donor. Cys726 contributes to the Zn(2+) binding site.

It belongs to the vitamin-B12 independent methionine synthase family. The cofactor is Zn(2+).

The enzyme catalyses 5-methyltetrahydropteroyltri-L-glutamate + L-homocysteine = tetrahydropteroyltri-L-glutamate + L-methionine. Its pathway is amino-acid biosynthesis; L-methionine biosynthesis via de novo pathway; L-methionine from L-homocysteine (MetE route): step 1/1. In terms of biological role, catalyzes the transfer of a methyl group from 5-methyltetrahydrofolate to homocysteine resulting in methionine formation. The chain is 5-methyltetrahydropteroyltriglutamate--homocysteine methyltransferase from Salmonella dublin (strain CT_02021853).